Reading from the N-terminus, the 309-residue chain is MFSPADNIFIILITGEFILGILGNGYIALVNWIDWIKKKKISTVDYILTNLVIARICLISVMVVNGIVIVLNPDVYTKNKQQIVIFTFWTFANYLNMWITTCLNVFYFLKIASSSHPLFLWLKWKIDMVVHWILLGCFAISLLVSLIAAIVLSCDYRFHAIAKHKRNITEMFHVSKIPYFEPLTLFNLFAIVPFIVSLISFFLLVRSLWRHTKQIKLYATGSRDPSTEVHVRAIKTMTSFIFFFFLYYISSILMTFSYLMTKYKLAVEFGEIAAILYPLGHSLILIVLNNKLRQTFVRMLTCRKIACMI.

Residues 1–7 (MFSPADN) lie on the Extracellular side of the membrane. The chain crosses the membrane as a helical span at residues 8–28 (IFIILITGEFILGILGNGYIA). At 29 to 50 (LVNWIDWIKKKKISTVDYILTN) the chain is on the cytoplasmic side. A helical transmembrane segment spans residues 51 to 71 (LVIARICLISVMVVNGIVIVL). Over 72–82 (NPDVYTKNKQQ) the chain is Extracellular. Residues 83–103 (IVIFTFWTFANYLNMWITTCL) traverse the membrane as a helical segment. Topologically, residues 104–131 (NVFYFLKIASSSHPLFLWLKWKIDMVVH) are cytoplasmic. A helical membrane pass occupies residues 132 to 152 (WILLGCFAISLLVSLIAAIVL). Topologically, residues 153–184 (SCDYRFHAIAKHKRNITEMFHVSKIPYFEPLT) are extracellular. An N-linked (GlcNAc...) asparagine glycan is attached at N167. The helical transmembrane segment at 185–205 (LFNLFAIVPFIVSLISFFLLV) threads the bilayer. Topologically, residues 206–239 (RSLWRHTKQIKLYATGSRDPSTEVHVRAIKTMTS) are cytoplasmic. Residues 240-260 (FIFFFFLYYISSILMTFSYLM) traverse the membrane as a helical segment. The Extracellular portion of the chain corresponds to 261 to 266 (TKYKLA). A helical membrane pass occupies residues 267 to 287 (VEFGEIAAILYPLGHSLILIV). At 288–309 (LNNKLRQTFVRMLTCRKIACMI) the chain is on the cytoplasmic side.

This sequence belongs to the G-protein coupled receptor T2R family. In terms of tissue distribution, expressed in subsets of taste receptor cells of the tongue and palate epithelium and exclusively in gustducin-positive cells.

Its subcellular location is the membrane. Receptor that may play a role in the perception of bitterness and is gustducin-linked. May play a role in sensing the chemical composition of the gastrointestinal content. The activity of this receptor may stimulate alpha gustducin, mediate PLC-beta-2 activation and lead to the gating of TRPM5. The sequence is that of Taste receptor type 2 member 8 (TAS2R8) from Homo sapiens (Human).